The primary structure comprises 1265 residues: Protein FAM193A (1265 aa).

A coiled-coil region spans residues 107 to 142 (SEDTYSTLLQRYQRSEEELRRVAEEWLECQKRIDAY). A disordered region spans residues 247–272 (APDYLAERSPPSVSSASSGSGSSSPI). Residues 255 to 271 (SPPSVSSASSGSGSSSP) are compositionally biased toward low complexity. S293 is modified (phosphoserine). Disordered regions lie at residues 331 to 407 (NGGG…EQAP), 553 to 586 (GSEILGPTLSETRPEALPPPSSNETPAVSDSKEK), 626 to 674 (VQSS…APLP), 750 to 785 (ENGVYDPQQDDGDESADEDSCSEHSSSTSTSTNQKE), 822 to 841 (LTKRKEEQPKKMDQISERES), 859 to 881 (ETKPVSSTRAAKRARHKQRKLEE), and 893 to 1163 (EHLH…DRVN). The segment covering 355-365 (EADDEEADGES) has biased composition (acidic residues). At S383 the chain carries Phosphoserine. At S642 the chain carries Phosphoserine. Over residues 757–769 (QQDDGDESADEDS) the composition is skewed to acidic residues. Low complexity predominate over residues 772–781 (EHSSSTSTST). Residues 868–877 (AAKRARHKQR) are compositionally biased toward basic residues. Positions 873–932 (RHKQRKLEEKARLEAEARAREHLHLQEEQRRREEEEDEEEEEDRFKEEFQRLQELQKLRA) form a coiled coil. 2 stretches are compositionally biased toward basic and acidic residues: residues 893–905 (EHLHLQEEQRRRE) and 915–929 (DRFKEEFQRLQELQK). Residues 931–940 (RAVKKKKKER) are compositionally biased toward basic residues. Residues 953-973 (RNFQAATESVPNSGNIHNGSL) show a composition bias toward polar residues. A coiled-coil region spans residues 1093 to 1118 (TEQKREERKVNSNNNNKKQLNHIKDE). 2 positions are modified to phosphoserine: S1129 and S1144. Residues 1149–1159 (GKNKKNKKKKG) show a composition bias toward basic residues.

This sequence belongs to the FAM193 family.

This Homo sapiens (Human) protein is Protein FAM193A (FAM193A).